The following is a 407-amino-acid chain: Probable acyl-CoA dehydrogenase FadE2 (407 aa).

The protein belongs to the acyl-CoA dehydrogenase family. It depends on FAD as a cofactor.

The enzyme catalyses a 2,3-saturated acyl-CoA + A = a 2,3-dehydroacyl-CoA + AH2. This Mycobacterium tuberculosis (strain ATCC 25618 / H37Rv) protein is Probable acyl-CoA dehydrogenase FadE2.